We begin with the raw amino-acid sequence, 981 residues long: Little elongation complex subunit 2 (981 aa).

Phosphoserine is present on residues Ser-17 and Ser-326. Disordered regions lie at residues 406-427 (FGAT…TVAP) and 475-516 (IDSG…SDPL). Residues 408-424 (ATTTKPSKSPSPASTST) are compositionally biased toward low complexity. Residues 480–489 (EESKNKDDQR) are compositionally biased toward basic and acidic residues. Ser-573 carries the post-translational modification Phosphoserine. Thr-575 carries the phosphothreonine modification. 3 disordered regions span residues 591-627 (HGKT…TCPE), 669-690 (LMNS…PSDA), and 930-981 (PPKS…RKIT). Residues 599 to 624 (SNLSSKPASLNSSSGQTSTGNQTNST) show a composition bias toward low complexity. 2 stretches are compositionally biased toward polar residues: residues 671-686 (NSEN…QPSA) and 954-969 (NSVS…QQVE).

Belongs to the ICE2 family. In terms of assembly, component of the little elongation complex (LEC), at least composed of ELL (ELL, ELL2 or ELL3), ZC3H8, ICE1 and ICE2. Interacts with ICE1 (via C-terminus domain). Interacts with ELL.

It localises to the nucleus. In terms of biological role, component of the little elongation complex (LEC), a complex required to regulate small nuclear RNA (snRNA) gene transcription by RNA polymerase II and III. This is Little elongation complex subunit 2 (ICE2) from Bos taurus (Bovine).